The chain runs to 461 residues: Putative transcription initiation factor IIB-like protein (461 aa).

Residues 113–142 (SESLENIQSENSENNDNFTDNNTKKSPTKS) form a disordered region. Over residues 121-137 (SENSENNDNFTDNNTKK) the composition is skewed to low complexity. The TFIIB-type zinc-finger motif lies at 141–173 (KSRICSGCGSKGTLLEDQSSSVLVCSECGMIND). 3 residues coordinate Zn(2+): cysteine 145, cysteine 165, and cysteine 168. Tandem repeats lie at residues 246–327 (ISTI…EKKV) and 360–430 (IRRH…DVTI).

This sequence belongs to the TFIIB family.

This is Putative transcription initiation factor IIB-like protein from Acanthamoeba polyphaga mimivirus (APMV).